The following is a 2104-amino-acid chain: Protein Ycf2 (2104 aa).

An ATP-binding site is contributed by 1396–1403 (GPVETGRS).

Belongs to the Ycf2 family.

It localises to the plastid. The protein localises to the chloroplast stroma. Its function is as follows. Probable ATPase of unknown function. Its presence in a non-photosynthetic plant (Epifagus virginiana) and experiments in tobacco indicate that it has an essential function which is probably not related to photosynthesis. This is Protein Ycf2 (ycf2-A) from Adiantum capillus-veneris (Maidenhair fern).